The sequence spans 254 residues: Methyl-CpG-binding domain-containing protein 11 (254 aa).

An MBD domain is found at 4–74 (EEEVVSVELP…AEFDWTTSGT (71 aa)). A disordered region spans residues 56-254 (KSHPGNPAIA…EKTAEGEATG (199 aa)). Composition is skewed to basic and acidic residues over residues 80–97 (RISE…EPPK), 107–130 (SKKD…KDTE), 151–162 (ETERVNDAKENI), and 178–254 (ESMK…EATG). Phosphoserine is present on serine 116.

In terms of tissue distribution, expressed in leaves (around hydathodes), buds, flowers (carpels and pollen grains), stems (around nodes), siliques, mature seeds and roots.

The protein localises to the nucleus. Transcriptional regulator that binds DNA independently of its methylation status. Required during plant organogenesis and development. In Arabidopsis thaliana (Mouse-ear cress), this protein is Methyl-CpG-binding domain-containing protein 11 (MBD11).